A 180-amino-acid chain; its full sequence is Inner membrane-spanning protein YciB (180 aa).

6 consecutive transmembrane segments (helical) span residues 4–24 (LLSEIGPVIAFFAGFFYGGGI), 25–45 (QHATLYMLITSVICITLCYVI), 52–72 (LSIISTTVLLVSGSITLISGN), 76–96 (IKIKPTILYVIFGIIFLMSGI), 118–138 (ITLSYRTAAFFFFMAVVNEVV), and 150–170 (FKVFGVIPITVIFILLQLPLL).

Belongs to the YciB family.

It localises to the cell inner membrane. Functionally, plays a role in cell envelope biogenesis, maintenance of cell envelope integrity and membrane homeostasis. The protein is Inner membrane-spanning protein YciB of Rickettsia massiliae (strain Mtu5).